The sequence spans 640 residues: Serine/threonine-protein kinase WNG1 (640 aa).

The first 70 residues, Met1–Ala70, serve as a signal peptide directing secretion. 2 disordered regions span residues Pro100 to Thr222 and Ser237 to Asn280. A compositionally biased stretch (polar residues) spans His104 to Gln120. Residues Arg124–Ala141 show a composition bias toward basic and acidic residues. Over residues Gln175–Ala186 the composition is skewed to low complexity. Residues Phe248–Ser279 show a composition bias toward basic and acidic residues. Positions Trp291–Phe593 constitute a Protein kinase domain. Lys395 lines the ATP pocket. Asp486 (proton acceptor) is an active-site residue. The segment at Pro609–Glu640 is disordered. The span at Lys631–Glu640 shows a compositional bias: basic and acidic residues.

It belongs to the protein kinase superfamily. STE Ser/Thr protein kinase family. WNG subfamily. Requires Mg(2+) as cofactor.

It is found in the cytoplasmic granule. The protein localises to the secreted. It localises to the parasitophorous vacuole lumen. The catalysed reaction is L-seryl-[protein] + ATP = O-phospho-L-seryl-[protein] + ADP + H(+). It catalyses the reaction L-threonyl-[protein] + ATP = O-phospho-L-threonyl-[protein] + ADP + H(+). Its function is as follows. Serine/threonine-protein kinase which, at the tachyzoite stage, phosphorylates several parasitophorous vacuole (PV)-resident proteins such as GRA2, GRA6 and GRA7. By phosphorylating GRA2 and GRA6, regulates the formation of a functional intravacuolar network (IVN); IVN is composed of membranous tubules that bud from the PV membrane into the vacuolar lumen. Plays a role in the establishement of chronic infection in the host by controlling cyst formation in the host tissues. This Toxoplasma gondii protein is Serine/threonine-protein kinase WNG1.